We begin with the raw amino-acid sequence, 1064 residues long: Carbamoyl phosphate synthase large chain (1064 aa).

A carboxyphosphate synthetic domain region spans residues 1–401; that stretch reads MPKRADIKKI…ALMKAIRSLE (401 aa). ATP is bound by residues arginine 129, arginine 169, glycine 175, glycine 176, lysine 208, isoleucine 210, glutamate 215, glycine 241, isoleucine 242, histidine 243, glutamine 284, and glutamate 298. Positions 133-327 constitute an ATP-grasp 1 domain; that stretch reads KQLMEALKEP…IAKMAAKIAI (195 aa). Residues glutamine 284, glutamate 298, and asparagine 300 each contribute to the Mg(2+) site. Mn(2+)-binding residues include glutamine 284, glutamate 298, and asparagine 300. Positions 402-546 are oligomerization domain; it reads IGTFALDDLT…YSTYELENES (145 aa). The segment at 547 to 929 is carbamoyl phosphate synthetic domain; sequence LKEKRPSVLV…ALYKAFVAAG (383 aa). An ATP-grasp 2 domain is found at 671-861; that stretch reads NQVIKKLDLS…LAQLATRVML (191 aa). ATP-binding residues include arginine 707, serine 746, leucine 748, glutamate 752, glycine 777, valine 778, histidine 779, serine 780, glutamine 820, and glutamate 832. Positions 820, 832, and 834 each coordinate Mg(2+). Positions 820, 832, and 834 each coordinate Mn(2+). The MGS-like domain occupies 930–1064; it reads FKVHEHGNVL…VSAINKGDKS (135 aa). Positions 930 to 1064 are allosteric domain; sequence FKVHEHGNVL…VSAINKGDKS (135 aa).

It belongs to the CarB family. As to quaternary structure, composed of two chains; the small (or glutamine) chain promotes the hydrolysis of glutamine to ammonia, which is used by the large (or ammonia) chain to synthesize carbamoyl phosphate. Tetramer of heterodimers (alpha,beta)4. The cofactor is Mg(2+). Requires Mn(2+) as cofactor.

It catalyses the reaction hydrogencarbonate + L-glutamine + 2 ATP + H2O = carbamoyl phosphate + L-glutamate + 2 ADP + phosphate + 2 H(+). The enzyme catalyses hydrogencarbonate + NH4(+) + 2 ATP = carbamoyl phosphate + 2 ADP + phosphate + 2 H(+). The protein operates within amino-acid biosynthesis; L-arginine biosynthesis; carbamoyl phosphate from bicarbonate: step 1/1. It participates in pyrimidine metabolism; UMP biosynthesis via de novo pathway; (S)-dihydroorotate from bicarbonate: step 1/3. Its function is as follows. Large subunit of the glutamine-dependent carbamoyl phosphate synthetase (CPSase). CPSase catalyzes the formation of carbamoyl phosphate from the ammonia moiety of glutamine, carbonate, and phosphate donated by ATP, constituting the first step of 2 biosynthetic pathways, one leading to arginine and/or urea and the other to pyrimidine nucleotides. The large subunit (synthetase) binds the substrates ammonia (free or transferred from glutamine from the small subunit), hydrogencarbonate and ATP and carries out an ATP-coupled ligase reaction, activating hydrogencarbonate by forming carboxy phosphate which reacts with ammonia to form carbamoyl phosphate. In Oenococcus oeni (strain ATCC BAA-331 / PSU-1), this protein is Carbamoyl phosphate synthase large chain.